Here is a 172-residue protein sequence, read N- to C-terminus: Adenine phosphoribosyltransferase (172 aa).

It belongs to the purine/pyrimidine phosphoribosyltransferase family. In terms of assembly, homodimer.

It localises to the cytoplasm. It catalyses the reaction AMP + diphosphate = 5-phospho-alpha-D-ribose 1-diphosphate + adenine. It functions in the pathway purine metabolism; AMP biosynthesis via salvage pathway; AMP from adenine: step 1/1. Functionally, catalyzes a salvage reaction resulting in the formation of AMP, that is energically less costly than de novo synthesis. This chain is Adenine phosphoribosyltransferase, found in Clostridium perfringens (strain ATCC 13124 / DSM 756 / JCM 1290 / NCIMB 6125 / NCTC 8237 / Type A).